The chain runs to 149 residues: Nucleoside diphosphate kinase (149 aa).

The ATP site is built by lysine 9, phenylalanine 57, arginine 85, threonine 91, arginine 102, and asparagine 112. Residue histidine 115 is the Pros-phosphohistidine intermediate of the active site.

The protein belongs to the NDK family. Mg(2+) serves as cofactor.

It is found in the cytoplasm. It catalyses the reaction a 2'-deoxyribonucleoside 5'-diphosphate + ATP = a 2'-deoxyribonucleoside 5'-triphosphate + ADP. The catalysed reaction is a ribonucleoside 5'-diphosphate + ATP = a ribonucleoside 5'-triphosphate + ADP. Major role in the synthesis of nucleoside triphosphates other than ATP. The ATP gamma phosphate is transferred to the NDP beta phosphate via a ping-pong mechanism, using a phosphorylated active-site intermediate. This chain is Nucleoside diphosphate kinase, found in Methanococcoides burtonii (strain DSM 6242 / NBRC 107633 / OCM 468 / ACE-M).